Consider the following 306-residue polypeptide: ATP synthase gamma chain (306 aa).

This sequence belongs to the ATPase gamma chain family. F-type ATPases have 2 components, CF(1) - the catalytic core - and CF(0) - the membrane proton channel. CF(1) has five subunits: alpha(3), beta(3), gamma(1), delta(1), epsilon(1). CF(0) has three main subunits: a, b and c.

It localises to the cell membrane. In terms of biological role, produces ATP from ADP in the presence of a proton gradient across the membrane. The gamma chain is believed to be important in regulating ATPase activity and the flow of protons through the CF(0) complex. The protein is ATP synthase gamma chain of Bifidobacterium adolescentis (strain ATCC 15703 / DSM 20083 / NCTC 11814 / E194a).